A 265-amino-acid polypeptide reads, in one-letter code: MLKSSPLHSASVASGLLKCFLGAHPLLPATYEKCGLTTSCRRSTTIHSPAKIWQPPSCRYFSKSRPILSPLPETSEQSSPSYLSTANKPPGTDEQGLKSDRGDINSDSKSTSKTSRSKKSNVPRSSKSTTQKREKPEKPRELEPWQIQKQALKKKFPEGWNPRKRLHPDTLDTIRHLHQQDPNIYSTPALAQEFKVSPEAIRRILKSKWQPTPEVAAERRERWEKRRKRIWNQLSEIGVRPHRPSFADVSDTKVLEKKRRTVGSK.

The transit peptide at 1–68 (MLKSSPLHSA…RYFSKSRPIL (68 aa)) directs the protein to the mitochondrion. Residues 69-167 (SPLPETSEQS…EGWNPRKRLH (99 aa)) are disordered. Over residues 72-87 (PETSEQSSPSYLSTAN) the composition is skewed to polar residues. 2 stretches are compositionally biased toward basic and acidic residues: residues 95–106 (QGLKSDRGDINS) and 131–143 (QKRE…RELE).

The protein belongs to the RRG9 family.

Its subcellular location is the mitochondrion. Functionally, required for respiratory activity and maintenance and expression of the mitochondrial genome. The protein is Required for respiratory growth protein 9, mitochondrial (RRG9) of Blastomyces gilchristii (strain SLH14081) (Blastomyces dermatitidis).